We begin with the raw amino-acid sequence, 536 residues long: Cytoplasmic dynein 2 intermediate chain 2 (536 aa).

Phosphoserine is present on Ser-15. Residues 80–93 (RNHVDAQVQTEAPV) form a DYNLL2 binding region. Residues 106 to 131 (PRLAAFLRRVEAMVIRELNKNWQSHA) are DYNLRB1 binding. WD repeat units lie at residues 215–255 (EVPS…DPLL), 264–308 (THTD…QLQL), 390–430 (PHGG…PLTS), 433–473 (LSLK…QKPT), and 480–520 (QDES…TEQG).

This sequence belongs to the dynein light intermediate chain family. In terms of assembly, the cytoplasmic dynein 2 complex consists of two catalytic heavy chains (HCs) and a number of non-catalytic subunits presented by intermediate chains (ICs), light intermediate chains (LICs) and light chains (LCs). Among them, a heavy chain (DYNC2H1), two intermediate chains (DYNC2I2 and DYNC2I1), a light intermediate chain (DYNC2LI1), and a light chain (DYNLT2B) are unique to the cytoplasmic dynein complex 2, but a subset of the light chains are also shared by dynein-1 and dynein-2 complexes. Interacts with DYNC2I1; their C-terminal domains each bind a copy of the heavy chain, and their extended N-terminal regions are held together by an array of light chain dimers. Interacts with DYNLL2; this interaction is essential for dynein-2-mediated retrograde trafficking of ciliary proteins. Interacts with DYNLRB1; this interaction is essential for dynein-2-mediated retrograde trafficking of ciliary proteins. Interacts (via the WD domains) with MAP3K7 and TAB3. Interacts (via WD domains) with TAB2 (via C-terminus). Interacts (via WD domains) with TRAF6 (via TRAF-type domains). Expressed in several cell lines (at protein level).

It is found in the cytoplasm. The protein resides in the cytoskeleton. It localises to the cilium basal body. The protein localises to the cilium axoneme. Its subcellular location is the microtubule organizing center. It is found in the centrosome. The protein resides in the cell projection. It localises to the cilium. The protein localises to the filopodium. Functionally, acts as one of several non-catalytic accessory components of the cytoplasmic dynein 2 complex (dynein-2 complex), a motor protein complex that drives the movement of cargos along microtubules within cilia and flagella in concert with the intraflagellar transport (IFT) system. DYNC2I2 plays a major role in retrograde ciliary protein trafficking and in ciliogenesis. Required also to maintain a functional transition zone. Its function is as follows. Acts as a negative regulator of the Toll-like and IL-1R receptor signaling pathways. Inhibits the MAP3K7-induced NF-kappa-B activation pathway. Inhibits MAP3K7 phosphorylation at 'Thr-184' and 'Thr-187' upon Il-1 beta stimulation. The protein is Cytoplasmic dynein 2 intermediate chain 2 of Homo sapiens (Human).